The sequence spans 345 residues: Biotin synthase (345 aa).

The Radical SAM core domain maps to 38-256 (RQVQVSTLLS…IAVARIMMPA (219 aa)). 3 residues coordinate [4Fe-4S] cluster: cysteine 53, cysteine 57, and cysteine 60. Residues cysteine 97, cysteine 128, cysteine 188, and arginine 260 each coordinate [2Fe-2S] cluster.

The protein belongs to the radical SAM superfamily. Biotin synthase family. In terms of assembly, homodimer. It depends on [4Fe-4S] cluster as a cofactor. Requires [2Fe-2S] cluster as cofactor.

The catalysed reaction is (4R,5S)-dethiobiotin + (sulfur carrier)-SH + 2 reduced [2Fe-2S]-[ferredoxin] + 2 S-adenosyl-L-methionine = (sulfur carrier)-H + biotin + 2 5'-deoxyadenosine + 2 L-methionine + 2 oxidized [2Fe-2S]-[ferredoxin]. The protein operates within cofactor biosynthesis; biotin biosynthesis; biotin from 7,8-diaminononanoate: step 2/2. Catalyzes the conversion of dethiobiotin (DTB) to biotin by the insertion of a sulfur atom into dethiobiotin via a radical-based mechanism. In Pectobacterium atrosepticum (strain SCRI 1043 / ATCC BAA-672) (Erwinia carotovora subsp. atroseptica), this protein is Biotin synthase.